The primary structure comprises 209 residues: Holliday junction branch migration complex subunit RuvA (209 aa).

Positions 1–70 (MINYLRGQAI…EEQPLLYGFG (70 aa)) are domain I. The interval 71-149 (TAPERELFRQ…AWRQLREATT (79 aa)) is domain II. The interval 150–158 (TITAILPAA) is flexible linker. A domain III region spans residues 158 to 209 (AAILEDVQMTLLALGYSQEEIDRAMAVLSQDALFSKNTQPEDWIKGAINWLG).

This sequence belongs to the RuvA family. Homotetramer. Forms an RuvA(8)-RuvB(12)-Holliday junction (HJ) complex. HJ DNA is sandwiched between 2 RuvA tetramers; dsDNA enters through RuvA and exits via RuvB. An RuvB hexamer assembles on each DNA strand where it exits the tetramer. Each RuvB hexamer is contacted by two RuvA subunits (via domain III) on 2 adjacent RuvB subunits; this complex drives branch migration. In the full resolvosome a probable DNA-RuvA(4)-RuvB(12)-RuvC(2) complex forms which resolves the HJ.

The protein resides in the cytoplasm. The RuvA-RuvB-RuvC complex processes Holliday junction (HJ) DNA during genetic recombination and DNA repair, while the RuvA-RuvB complex plays an important role in the rescue of blocked DNA replication forks via replication fork reversal (RFR). RuvA specifically binds to HJ cruciform DNA, conferring on it an open structure. The RuvB hexamer acts as an ATP-dependent pump, pulling dsDNA into and through the RuvAB complex. HJ branch migration allows RuvC to scan DNA until it finds its consensus sequence, where it cleaves and resolves the cruciform DNA. This chain is Holliday junction branch migration complex subunit RuvA, found in Microcystis aeruginosa (strain NIES-843 / IAM M-2473).